Consider the following 287-residue polypeptide: 3-methyl-2-oxobutanoate hydroxymethyltransferase (287 aa).

Mg(2+)-binding residues include Asp-67 and Asp-106. Residues 67–68 (DS), Asp-106, and Lys-136 each bind 3-methyl-2-oxobutanoate. Residue Glu-138 coordinates Mg(2+). The Proton acceptor role is filled by Glu-204.

Belongs to the PanB family. As to quaternary structure, homodecamer; pentamer of dimers. Mg(2+) is required as a cofactor.

The protein resides in the cytoplasm. The catalysed reaction is 3-methyl-2-oxobutanoate + (6R)-5,10-methylene-5,6,7,8-tetrahydrofolate + H2O = 2-dehydropantoate + (6S)-5,6,7,8-tetrahydrofolate. It functions in the pathway cofactor biosynthesis; (R)-pantothenate biosynthesis; (R)-pantoate from 3-methyl-2-oxobutanoate: step 1/2. In terms of biological role, catalyzes the reversible reaction in which hydroxymethyl group from 5,10-methylenetetrahydrofolate is transferred onto alpha-ketoisovalerate to form ketopantoate. The protein is 3-methyl-2-oxobutanoate hydroxymethyltransferase of Streptomyces avermitilis (strain ATCC 31267 / DSM 46492 / JCM 5070 / NBRC 14893 / NCIMB 12804 / NRRL 8165 / MA-4680).